Reading from the N-terminus, the 349-residue chain is Hydroxymethylglutaryl-CoA synthase (349 aa).

(3S)-3-hydroxy-3-methylglutaryl-CoA is bound by residues Asp-30 and Ala-31. Catalysis depends on Glu-82, which acts as the Proton donor/acceptor. Cys-114 and Thr-155 together coordinate (3S)-3-hydroxy-3-methylglutaryl-CoA. Cys-114 functions as the Acyl-thioester intermediate in the catalytic mechanism. Arg-203 is a binding site for CoA. Thr-205 and His-238 together coordinate (3S)-3-hydroxy-3-methylglutaryl-CoA. His-238 serves as the catalytic Proton donor/acceptor. Residue Lys-243 participates in CoA binding. Positions 270 and 300 each coordinate (3S)-3-hydroxy-3-methylglutaryl-CoA.

Belongs to the thiolase-like superfamily. Archaeal HMG-CoA synthase family. As to quaternary structure, interacts with acetoacetyl-CoA thiolase that catalyzes the precedent step in the pathway and with a DUF35 protein. The acetoacetyl-CoA thiolase/HMG-CoA synthase complex channels the intermediate via a fused CoA-binding site, which allows for efficient coupling of the endergonic thiolase reaction with the exergonic HMGCS reaction.

It carries out the reaction acetoacetyl-CoA + acetyl-CoA + H2O = (3S)-3-hydroxy-3-methylglutaryl-CoA + CoA + H(+). It functions in the pathway metabolic intermediate biosynthesis; (R)-mevalonate biosynthesis; (R)-mevalonate from acetyl-CoA: step 2/3. Catalyzes the condensation of acetyl-CoA with acetoacetyl-CoA to form 3-hydroxy-3-methylglutaryl-CoA (HMG-CoA). Functions in the mevalonate (MVA) pathway leading to isopentenyl diphosphate (IPP), a key precursor for the biosynthesis of isoprenoid compounds that are building blocks of archaeal membrane lipids. The polypeptide is Hydroxymethylglutaryl-CoA synthase (Methanococcus maripaludis (strain DSM 14266 / JCM 13030 / NBRC 101832 / S2 / LL)).